The sequence spans 440 residues: Ribosomal protein uS12 methylthiotransferase RimO (440 aa).

Positions 8–125 (LRCHAISLGC…WNEQILLALN (118 aa)) constitute an MTTase N-terminal domain. Positions 17, 52, 87, 152, 156, and 159 each coordinate [4Fe-4S] cluster. The 231-residue stretch at 138-368 (TTGKSYAWLK…MEIQLKISEK (231 aa)) folds into the Radical SAM core domain. A TRAM domain is found at 371–439 (KNFVGKRLSL…SYDLVALADS (69 aa)).

This sequence belongs to the methylthiotransferase family. RimO subfamily. Requires [4Fe-4S] cluster as cofactor.

The protein localises to the cytoplasm. It catalyses the reaction L-aspartate(89)-[ribosomal protein uS12]-hydrogen + (sulfur carrier)-SH + AH2 + 2 S-adenosyl-L-methionine = 3-methylsulfanyl-L-aspartate(89)-[ribosomal protein uS12]-hydrogen + (sulfur carrier)-H + 5'-deoxyadenosine + L-methionine + A + S-adenosyl-L-homocysteine + 2 H(+). Catalyzes the methylthiolation of an aspartic acid residue of ribosomal protein uS12. The sequence is that of Ribosomal protein uS12 methylthiotransferase RimO from Lawsonia intracellularis (strain PHE/MN1-00).